The chain runs to 122 residues: Large ribosomal subunit protein uL14 (122 aa).

The protein belongs to the universal ribosomal protein uL14 family. As to quaternary structure, part of the 50S ribosomal subunit. Forms a cluster with proteins L3 and L19. In the 70S ribosome, L14 and L19 interact and together make contacts with the 16S rRNA in bridges B5 and B8.

Its function is as follows. Binds to 23S rRNA. Forms part of two intersubunit bridges in the 70S ribosome. The polypeptide is Large ribosomal subunit protein uL14 (Nitrosospira multiformis (strain ATCC 25196 / NCIMB 11849 / C 71)).